Here is a 106-residue protein sequence, read N- to C-terminus: UPF0060 membrane protein AZC_0909 (106 aa).

A run of 4 helical transmembrane segments spans residues 4–24 (PLFA…WHVV), 27–47 (GGSP…AALL), 58–78 (AFAA…WAAE), and 84–104 (RFDA…LFAP).

This sequence belongs to the UPF0060 family.

It is found in the cell inner membrane. This is UPF0060 membrane protein AZC_0909 from Azorhizobium caulinodans (strain ATCC 43989 / DSM 5975 / JCM 20966 / LMG 6465 / NBRC 14845 / NCIMB 13405 / ORS 571).